Consider the following 488-residue polypeptide: Lysine--tRNA ligase (488 aa).

Mg(2+) is bound by residues Glu-397 and Glu-404.

Belongs to the class-II aminoacyl-tRNA synthetase family. In terms of assembly, homodimer. It depends on Mg(2+) as a cofactor.

The protein resides in the cytoplasm. The enzyme catalyses tRNA(Lys) + L-lysine + ATP = L-lysyl-tRNA(Lys) + AMP + diphosphate. The sequence is that of Lysine--tRNA ligase (lysS) from Mycoplasmopsis fermentans (strain ATCC 19989 / NBRC 14854 / NCTC 10117 / PG18) (Mycoplasma fermentans).